Consider the following 618-residue polypeptide: Grainyhead-like protein 1 homolog (618 aa).

The segment at 1-91 is transcription activation; it reads MTQEYDNKRP…EGEHPEPEHS (91 aa). Over residues 76–92 the composition is skewed to basic and acidic residues; that stretch reads SSAVKPEGEHPEPEHSK. Positions 76–100 are disordered; it reads SSAVKPEGEHPEPEHSKRNSIPNVT. Position 208 is a phosphothreonine (threonine 208). The region spanning 248-474 is the Grh/CP2 DB domain; sequence SGNNFEYTLE…DLDTQPVLFI (227 aa). 2 interaction with DNA regions span residues 380–389 and 427–430; these read TDFSSQKGVK and RKIR.

Belongs to the grh/CP2 family. Grainyhead subfamily. As to quaternary structure, binds DNA as homodimer. Homodimer, also forms heterodimers with GRHL2 or GRHL3. In terms of processing, methylation at Arg-9 and Lys-116 may be involved in regulating transcriptional activation. Isoform 1 is highly expressed in brain, pancreas, tonsil, placenta and kidney. Isoform 2 is highly expressed in brain and liver. Expression in the skin is confined to the suprabasal layers of the epidermis and to the hair follicles.

It localises to the nucleus. Functionally, transcription factor involved in epithelial development. Binds directly to the consensus DNA sequence 5'-AACCGGTT-3'. Important regulator of DSG1 in the context of hair anchorage and epidermal differentiation, participates in the maintenance of the skin barrier. There is no genetic interaction with GRHL3, nor functional cooperativity due to diverse target gene selectivity during epithelia development. May play a role in regulating glucose homeostasis and insulin signaling. In Mus musculus (Mouse), this protein is Grainyhead-like protein 1 homolog.